Consider the following 210-residue polypeptide: Glycerol-3-phosphate acyltransferase 2 (210 aa).

The next 6 membrane-spanning stretches (helical) occupy residues 4–24 (LIMV…PAPY), 52–72 (VGFW…ALAM), 73–93 (AVAN…LMAI), 114–134 (IGIL…CFLI), 141–161 (FPTL…WLGQ), and 163–183 (DMGK…MYIP).

This sequence belongs to the PlsY family. In terms of assembly, probably interacts with PlsX.

The protein resides in the cell membrane. The enzyme catalyses an acyl phosphate + sn-glycerol 3-phosphate = a 1-acyl-sn-glycero-3-phosphate + phosphate. Its pathway is lipid metabolism; phospholipid metabolism. Functionally, catalyzes the transfer of an acyl group from acyl-phosphate (acyl-PO(4)) to glycerol-3-phosphate (G3P) to form lysophosphatidic acid (LPA). This enzyme utilizes acyl-phosphate as fatty acyl donor, but not acyl-CoA or acyl-ACP. The protein is Glycerol-3-phosphate acyltransferase 2 of Dehalococcoides mccartyi (strain CBDB1).